Consider the following 540-residue polypeptide: Receptor-interacting serine/threonine-protein kinase 2 (540 aa).

The Protein kinase domain maps to 18 to 294; it reads LADLRYLSRG…KCLIELEPVL (277 aa). Residues 24–32 and K47 contribute to the ATP site; that span reads LSRGASGTV. Residues 65–73 form a helix alphaC region; it reads REAEILHKA. D146 serves as the catalytic Proton acceptor. Residues 167–193 form an activation segment (AS) region; it reads LSKWRMMSLSQSRSSKSAPEGGTIVYM. Position 168 is a phosphoserine (S168). S174 carries the phosphoserine; alternate modification. Position 176 is a phosphoserine; by autocatalysis (S176). A Phosphoserine; alternate modification is found at S178. Residue S180 is modified to Phosphoserine. S181 carries the phosphoserine; alternate modification. A Glycyl lysine isopeptide (Lys-Gly) (interchain with G-Cter in ubiquitin) cross-link involves residue K209. The interval 318–367 is disordered; sequence SRTVHLSDKKKRELSPNIPVNSGPREESCGSSQLHKTSGSPGTSRSLSAP. The segment covering 322 to 331 has biased composition (basic and acidic residues); the sequence is HLSDKKKREL. Over residues 346 to 366 the composition is skewed to polar residues; it reads CGSSQLHKTSGSPGTSRSLSA. Phosphoserine is present on residues S363 and S391. The CARD domain occupies 432–524; sequence GIAQQWIQSK…LQPYPEILVL (93 aa). Y472 is subject to Phosphotyrosine; by autocatalysis. Phosphoserine is present on residues S525, S527, and S529. K536 is covalently cross-linked (Glycyl lysine isopeptide (Lys-Gly) (interchain with G-Cter in ubiquitin)). Position 537 is a phosphoserine (S537).

It belongs to the protein kinase superfamily. TKL Ser/Thr protein kinase family. As to quaternary structure, interacts (via CARD domain) with NOD2 (via CARD domain). Interacts (via CARD domain) with NOD1 (via CARD domain). Homooligomer; following interaction with NOD1 or NOD2, homooligomerizes via its CARD domain and forms long filaments named RIPosomes. Found in a signaling complex consisting of at least ARHGEF2, NOD2 and RIPK2. Interacts with ARHGEF2; the interaction mediates tyrosine phosphorylation of RIPK2 by Src kinase CSK. Interacts with MAP3K4; this interaction sequesters RIPK2 from the NOD2 signaling pathway. Interacts with IKBKG/NEMO. The polyubiquitinated protein interacts with MAP3K7/TAK1; interaction is indirect and is mediated by TAB2 and TAB3 that bind to polyubiquitin chains attached to RIPK2. Binds to CFLAR/CLARP and CASP1 via their CARD domains. Binds to BIRC3/c-IAP1 and BIRC2/c-IAP2, TRAF1, TRAF2, TRAF5 and TRAF6. Interacts with NLRP10. Interacts with CARD9. Interacts with INAVA; the interaction takes place upon PRR stimulation. Interacts (via CARD domain) with NGFR (via death domain). Interacts with IRGM; promoting RIPK2 degradation. Post-translationally, polyubiquitinated via both 'Lys-63'- and 'Met-1'-linked polyubiquitin following recruitment by NOD1 or NOD2, creating docking sites for downstream effectors, triggering activation of the NF-kappa-B and MAP kinases signaling. 'Lys-63'-linked polyubiquitination by XIAP is essential for NOD2 signaling and promotes recruitment of the LUBAC complex. Also polyubiquitinated with 'Lys-63'-linked chains by PELI3, BIRC2/c-IAP1 and BIRC3/c-IAP2. Ubiquitinated on Lys-209 via 'Lys-63'-linked by ITCH. Undergoes 'Lys-63'-linked deubiquitination by MYSM1 to attenuate NOD2-mediated inflammation and tissue damage. Polyubiquitinated with 'Lys-63'-linked chains in response to Shigella infection, promoting its SQSTM1/p62-dependent autophagic degradation. Undergoes 'Met-1'-linked polyubiquitination; the head-to-tail linear polyubiquitination is mediated by the LUBAC complex in response to NOD2 stimulation 'Met-1'-linked polyubiquitination. 'Lys-63'-linked polyubiquitination by XIAP is required for recruimtent of the LUBAC complex and subsequent. Linear polyubiquitination is restricted by FAM105B/otulin, probably to limit NOD2-dependent pro-inflammatory signaling activation of NF-kappa-B. Autophosphorylated. Phosphorylated at Ser-176, either via autophosphorylation or by LRRK2, enhancing activity. Autophosphorylation at Tyr-472 is required for effective NOD2 signaling. Autophosphorylation is however not essential for NOD2 signaling. In terms of processing, degraded via selective autophagy following interaction with IRGM. IRGM promotes NOD1/NOD2-RIPK2 RIPosome recruitment to autophagosome membranes. RIPK2 biquitinated via 'Lys-63'-linked chains is then recognized by SQSTM1/p62, leading to the SQSTM1/p62-dependent autophagic degradation of the NOD1/NOD2-RIPK2 RIPosome.

The protein resides in the cytoplasm. It localises to the cell membrane. Its subcellular location is the endoplasmic reticulum. The catalysed reaction is L-seryl-[protein] + ATP = O-phospho-L-seryl-[protein] + ADP + H(+). It carries out the reaction L-threonyl-[protein] + ATP = O-phospho-L-threonyl-[protein] + ADP + H(+). The enzyme catalyses L-tyrosyl-[protein] + ATP = O-phospho-L-tyrosyl-[protein] + ADP + H(+). In the inactive state, the helix alphaC is packed against the helical, non-phosphorylated activation segment (AS). Upon activation, helix alphaC is displaced and the phosphorylated AS becomes disordered. Functionally, serine/threonine/tyrosine-protein kinase that plays an essential role in modulation of innate and adaptive immune responses. Acts as a key effector of NOD1 and NOD2 signaling pathways: upon activation by bacterial peptidoglycans, NOD1 and NOD2 oligomerize and recruit RIPK2 via CARD-CARD domains, leading to the formation of RIPK2 filaments. Once recruited, RIPK2 autophosphorylates and undergoes 'Lys-63'-linked polyubiquitination by E3 ubiquitin ligases XIAP, BIRC2 and BIRC3, as well as 'Met-1'-linked (linear) polyubiquitination by the LUBAC complex, becoming a scaffolding protein for downstream effectors. 'Met-1'-linked polyubiquitin chains attached to RIPK2 recruit IKBKG/NEMO, which undergoes 'Lys-63'-linked polyubiquitination in a RIPK2-dependent process. 'Lys-63'-linked polyubiquitin chains attached to RIPK2 serve as docking sites for TAB2 and TAB3 and mediate the recruitment of MAP3K7/TAK1 to IKBKG/NEMO, inducing subsequent activation of IKBKB/IKKB. In turn, NF-kappa-B is released from NF-kappa-B inhibitors and translocates into the nucleus where it activates the transcription of hundreds of genes involved in immune response, growth control, or protection against apoptosis. The protein kinase activity is dispensable for the NOD1 and NOD2 signaling pathways. Contributes to the tyrosine phosphorylation of the guanine exchange factor ARHGEF2 through Src tyrosine kinase leading to NF-kappa-B activation by NOD2. Also involved in adaptive immunity: plays a role during engagement of the T-cell receptor (TCR) in promoting BCL10 phosphorylation and subsequent NF-kappa-B activation. Plays a role in the inactivation of RHOA in response to NGFR signaling. The protein is Receptor-interacting serine/threonine-protein kinase 2 (RIPK2) of Bos taurus (Bovine).